Consider the following 433-residue polypeptide: Protein RETICULATA-RELATED 1, chloroplastic (433 aa).

Residues 1-63 constitute a chloroplast transit peptide; it reads MSISLKISHI…LSSRNLRNRC (63 aa). Val64 carries the post-translational modification N-acetylvaline. Acidic residues predominate over residues 93 to 105; it reads DLEPELDDGDGGD. A disordered region spans residues 93–143; the sequence is DLEPELDDGDGGDENGNNDGGGNGGNGDGGGGGGDGEGDDGEDEADKAEEK. Positions 110 to 127 are enriched in gly residues; the sequence is NDGGGNGGNGDGGGGGGD. Positions 128–139 are enriched in acidic residues; sequence GEGDDGEDEADK. The next 2 helical transmembrane spans lie at 249 to 269 and 323 to 343; these read LYAA…GLLA and LLYG…ANLI.

Belongs to the RETICULATA family. As to expression, expressed in root vasculature, distal region of young leaf primordia, leaf bundle sheath cells, hydathodes and pollen grains.

It localises to the plastid. The protein localises to the chloroplast membrane. May play a role in leaf development. The polypeptide is Protein RETICULATA-RELATED 1, chloroplastic (Arabidopsis thaliana (Mouse-ear cress)).